Here is a 174-residue protein sequence, read N- to C-terminus: Peptide deformylase (174 aa).

2 residues coordinate Fe cation: Cys-96 and His-138. The active site involves Glu-139. His-142 is a Fe cation binding site.

It belongs to the polypeptide deformylase family. Fe(2+) serves as cofactor.

The enzyme catalyses N-terminal N-formyl-L-methionyl-[peptide] + H2O = N-terminal L-methionyl-[peptide] + formate. Its function is as follows. Removes the formyl group from the N-terminal Met of newly synthesized proteins. Requires at least a dipeptide for an efficient rate of reaction. N-terminal L-methionine is a prerequisite for activity but the enzyme has broad specificity at other positions. The polypeptide is Peptide deformylase (Helicobacter pylori (strain HPAG1)).